The sequence spans 222 residues: Orotate phosphoribosyltransferase (222 aa).

Position 29 (K29) interacts with 5-phospho-alpha-D-ribose 1-diphosphate. 37–38 (FF) is an orotate binding site. 5-phospho-alpha-D-ribose 1-diphosphate contacts are provided by residues 75–76 (YK), R101, K102, K105, H107, and 126–134 (DDVISAGTS). 2 residues coordinate orotate: S130 and R158.

It belongs to the purine/pyrimidine phosphoribosyltransferase family. PyrE subfamily. As to quaternary structure, homodimer. Requires Mg(2+) as cofactor.

It catalyses the reaction orotidine 5'-phosphate + diphosphate = orotate + 5-phospho-alpha-D-ribose 1-diphosphate. The protein operates within pyrimidine metabolism; UMP biosynthesis via de novo pathway; UMP from orotate: step 1/2. Its function is as follows. Catalyzes the transfer of a ribosyl phosphate group from 5-phosphoribose 1-diphosphate to orotate, leading to the formation of orotidine monophosphate (OMP). In Polynucleobacter asymbioticus (strain DSM 18221 / CIP 109841 / QLW-P1DMWA-1) (Polynucleobacter necessarius subsp. asymbioticus), this protein is Orotate phosphoribosyltransferase.